Here is a 270-residue protein sequence, read N- to C-terminus: Molybdenum-pterin-binding protein MopB (270 aa).

2 consecutive Mop domains span residues 131 to 197 (RTSA…LLAG) and 203 to 269 (RLSV…ILAL).

Belongs to the ModE family.

The protein is Molybdenum-pterin-binding protein MopB (mopB) of Rhodobacter capsulatus (Rhodopseudomonas capsulata).